Here is a 501-residue protein sequence, read N- to C-terminus: Cytochrome P450 3A31 (501 aa).

Cys440 lines the heme pocket.

Belongs to the cytochrome P450 family. Heme serves as cofactor. In terms of tissue distribution, expressed constitutively in liver.

Its subcellular location is the endoplasmic reticulum membrane. The protein localises to the microsome membrane. The enzyme catalyses an organic molecule + reduced [NADPH--hemoprotein reductase] + O2 = an alcohol + oxidized [NADPH--hemoprotein reductase] + H2O + H(+). In terms of biological role, cytochromes P450 are a group of heme-thiolate monooxygenases. In liver microsomes, this enzyme is involved in an NADPH-dependent electron transport pathway. It oxidizes a variety of structurally unrelated compounds, including steroids, fatty acids, and xenobiotics. The sequence is that of Cytochrome P450 3A31 (CYP3A31) from Mesocricetus auratus (Golden hamster).